A 93-amino-acid polypeptide reads, in one-letter code: YcgL domain-containing protein Shew_2183 (93 aa).

In terms of domain architecture, YcgL spans 1–85; that stretch reads MICAVYKSRL…PPVNLLEEYK (85 aa).

The protein is YcgL domain-containing protein Shew_2183 of Shewanella loihica (strain ATCC BAA-1088 / PV-4).